A 246-amino-acid chain; its full sequence is Probable transcriptional regulatory protein YebC (246 aa).

Residues 1-20 (MAGHSKWANTRHRKAAQDAK) are disordered.

This sequence belongs to the TACO1 family.

The protein resides in the cytoplasm. The sequence is that of Probable transcriptional regulatory protein YebC from Shigella flexneri.